The chain runs to 234 residues: tRNA1(Val) (adenine(37)-N6)-methyltransferase (234 aa).

Belongs to the methyltransferase superfamily. tRNA (adenine-N(6)-)-methyltransferase family.

Its subcellular location is the cytoplasm. The catalysed reaction is adenosine(37) in tRNA1(Val) + S-adenosyl-L-methionine = N(6)-methyladenosine(37) in tRNA1(Val) + S-adenosyl-L-homocysteine + H(+). Its function is as follows. Specifically methylates the adenine in position 37 of tRNA(1)(Val) (anticodon cmo5UAC). This is tRNA1(Val) (adenine(37)-N6)-methyltransferase from Aliivibrio salmonicida (strain LFI1238) (Vibrio salmonicida (strain LFI1238)).